The chain runs to 40 residues: Protein 4.1 (40 aa).

The chain is Protein 4.1 from Escherichia phage T7 (Bacteriophage T7).